We begin with the raw amino-acid sequence, 432 residues long: MQVTVETLEGLERRLNITVPAANIEDAVTAELRNIAKNRRFDGFRKGKVPMKMVAKMYGKAVRQDVMGEVMQRHFIEAIVKEKINPAGAPTFAPVENNEGADLVFNATFEVYPEVELKGLENITVEKPAVEVKEADVEEMIETLRKQQATWTEVEAAADAGSRATIDFVGSIDGEEFEGGKAENFPLEMGAGRMIPGFEDGIVGKTAGMEFEIEVNFPEDYHAENLKGKAAKFSIKLNKVEARELPELNEEFVSKFGAAEGVEGLKAEVRKNMERELKQAVKNRIKEQAIDGLVNENNIDVPSALIDQEIGVLRQQAAQRFGGNTEAADQLPRELFEEQAKRRVVVGLLLGEVIKTEELKADDEKVKAIIEEMATAYEDPTEVIAYYEQNEQMMNNMRNVALEEQAIDAIIAKAQVSDKEVSFNELMNQQPA.

Residues 161–246 (GSRATIDFVG…LNKVEARELP (86 aa)) enclose the PPIase FKBP-type domain.

Belongs to the FKBP-type PPIase family. Tig subfamily.

The protein localises to the cytoplasm. It carries out the reaction [protein]-peptidylproline (omega=180) = [protein]-peptidylproline (omega=0). Functionally, involved in protein export. Acts as a chaperone by maintaining the newly synthesized protein in an open conformation. Functions as a peptidyl-prolyl cis-trans isomerase. The protein is Trigger factor of Vibrio atlanticus (strain LGP32) (Vibrio splendidus (strain Mel32)).